The primary structure comprises 130 residues: Ribonuclease P protein component 2 (130 aa).

Belongs to the eukaryotic/archaeal RNase P protein component 2 family. As to quaternary structure, consists of a catalytic RNA component and at least 4-5 protein subunits.

It is found in the cytoplasm. The catalysed reaction is Endonucleolytic cleavage of RNA, removing 5'-extranucleotides from tRNA precursor.. Functionally, part of ribonuclease P, a protein complex that generates mature tRNA molecules by cleaving their 5'-ends. This Methanococcus vannielii (strain ATCC 35089 / DSM 1224 / JCM 13029 / OCM 148 / SB) protein is Ribonuclease P protein component 2.